The chain runs to 430 residues: Histidine--tRNA ligase (430 aa).

This sequence belongs to the class-II aminoacyl-tRNA synthetase family. In terms of assembly, homodimer.

The protein localises to the cytoplasm. The catalysed reaction is tRNA(His) + L-histidine + ATP = L-histidyl-tRNA(His) + AMP + diphosphate + H(+). The chain is Histidine--tRNA ligase from Chlorobium luteolum (strain DSM 273 / BCRC 81028 / 2530) (Pelodictyon luteolum).